The following is a 554-amino-acid chain: 3-(3-hydroxy-phenyl)propionate/3-hydroxycinnamic acid hydroxylase (554 aa).

Residues 17 to 46 and 285 to 295 contribute to the FAD site; these read QVAI…VVEK and FRIDRVLLAGD.

Belongs to the PheA/TfdB FAD monooxygenase family. It depends on FAD as a cofactor.

It carries out the reaction 3-(3-hydroxyphenyl)propanoate + NADH + O2 + H(+) = 3-(2,3-dihydroxyphenyl)propanoate + NAD(+) + H2O. It catalyses the reaction (2E)-3-(3-hydroxyphenyl)prop-2-enoate + NADH + O2 + H(+) = (2E)-3-(2,3-dihydroxyphenyl)prop-2-enoate + NAD(+) + H2O. It participates in aromatic compound metabolism; 3-phenylpropanoate degradation. Its function is as follows. Catalyzes the insertion of one atom of molecular oxygen into position 2 of the phenyl ring of 3-(3-hydroxyphenyl)propionate (3-HPP) and hydroxycinnamic acid (3HCI). The sequence is that of 3-(3-hydroxy-phenyl)propionate/3-hydroxycinnamic acid hydroxylase from Escherichia coli (strain K12 / DH10B).